The following is a 128-amino-acid chain: uncharacterized protein (128 aa).

This is an uncharacterized protein from Archaeoglobus fulgidus (strain ATCC 49558 / DSM 4304 / JCM 9628 / NBRC 100126 / VC-16).